The primary structure comprises 2517 residues: Cullin-9 (2517 aa).

Residue lysine 87 forms a Glycyl lysine isopeptide (Lys-Gly) (interchain with G-Cter in ubiquitin) linkage. A compositionally biased stretch (polar residues) spans 276-288 (SPELGAGDQSSPC). A disordered region spans residues 276–296 (SPELGAGDQSSPCATREKSRG). Positions 366–439 (RSEFSSRSGY…HWHMLEILGP (74 aa)) constitute a CPH domain. Over residues 576–589 (SNEPSSSSTSRNHS) the composition is skewed to low complexity. The disordered stretch occupies residues 576–639 (SNEPSSSSTS…TETPMAQSDS (64 aa)). Positions 593–609 (DPEEESKSEASFSEEET) are enriched in acidic residues. A compositionally biased stretch (basic and acidic residues) spans 610–630 (ESLKAKAEAPKTEAEPTKTRT). At serine 976 the chain carries Phosphoserine. The DOC domain occupies 1143–1322 (PINIPFFDVF…RTCLFYTIRA (180 aa)). 1363-1370 (AAQALGKT) is an ATP binding site. Disordered regions lie at residues 1432 to 1466 (VEPP…VLPS) and 1664 to 1685 (DEEE…AEKE). Pro residues predominate over residues 1433–1443 (EPPPGPSPEPS). Serine 1457 carries the phosphoserine modification. Residues 1649 to 1691 (LFQLQRLDKLFLEQEDEEEKRLEEEEEEEEEEEAEKELFIEDP) adopt a coiled-coil conformation. Residues 1664–1683 (DEEEKRLEEEEEEEEEEEAE) are compositionally biased toward acidic residues. Lysine 1881 participates in a covalent cross-link: Glycyl lysine isopeptide (Lys-Gly) (interchain with G-Cter in NEDD8). Residues 2066 to 2283 (RPDHCPVCVS…KDYYNCSAMV (218 aa)) are TRIAD supradomain. Zn(2+) contacts are provided by cysteine 2070, cysteine 2073, cysteine 2088, histidine 2090, cysteine 2093, cysteine 2096, cysteine 2115, cysteine 2120, cysteine 2160, cysteine 2166, cysteine 2181, cysteine 2184, cysteine 2189, cysteine 2192, histidine 2198, cysteine 2203, cysteine 2236, and cysteine 2239. The segment at 2070–2120 (CPVCVSPLGCDDDLPSLCCMHYCCKSCWNEYLTTRIEQNLVLNCTCPIADC) adopts an RING-type 1 zinc-finger fold. An IBR-type zinc finger spans residues 2140–2203 (SKYEKALLRG…FPEAHYPASC (64 aa)). The RING-type 2; atypical zinc finger occupies 2236–2265 (CPSCQAPIEKNEGCLHMTCAKCNHGFCWRC). Residue cysteine 2249 is part of the active site. Positions 2254, 2257, 2262, 2265, 2273, and 2279 each coordinate Zn(2+). Residues 2365-2385 (VEQQTENLELHTNALQILLEE) are a coiled coil. Serine 2436 carries the phosphoserine modification. Residues 2442–2517 (WEAKGPNMPG…EEEDEDEAYD (76 aa)) are disordered. Composition is skewed to acidic residues over residues 2461–2499 (EAEE…ENLD) and 2506–2517 (GDEEEDEDEAYD).

Belongs to the cullin family. As to quaternary structure, component of the Cul9-RING complex consisting of CUL9 and RBX1; the CUL9-RBX1 complex is a heterododecamer composed of six CUL9 and six RBX1 protomers. Interacts (via C-terminal TRIAD/RBR supradomain) with E2 ubiquitin-conjugating enzyme UBE2L3. Interacts with CUL7; the interaction with the CUL7 component of the 3M complex leads to inhibition of CUL9 activity. The CUL7-CUL9 heterodimer seems to interact specifically with TP53, likely via the CPH domain. Forms a complex with p53/TP53 in the cytoplasm of unstressed cells. Interacts with UBCH7 and UBCH8. In terms of processing, autoubiquitinated by the CUL9-RBX1 complex at Lys-87. Post-translationally, neddylated. Neddylation is mediated by E1 enzyme UBA3-NAE1 complex and E2 enzyme UBE2F. Structural rearrangment of the C-terminal TRIAD/RBR supradomain may play a role in neddylation and deneddylation. Ubiquitously expressed in all tissues with highest expression in testis brain and kidney.

The protein resides in the cytoplasm. Functionally, core component of a Cul9-RING ubiquitin-protein ligase complex composed of CUL9 and RBX1. The CUL9-RBX1 complex mediates ubiquitination and subsequent degradation of BIRC5 and is required to maintain microtubule dynamics and genome integrity. Acts downstream of the 3M complex, which inhibits the ubiquitination of BIRC5. The CUL9-RBX1 complex also mediates mono-ubiquitination of p53/TP53. Acts as a cytoplasmic anchor protein in p53/TP53-associated protein complex. Regulates the subcellular localization of p53/TP53 and its subsequent function. Ubiquitinates apurinic/apyrimidinic endodeoxyribonuclease APEX2. Ubiquitination by the CUL9-RBX1 complex is predominantly mediated by E2 ubiquitin-conjugating enzymes UBE2L3 and UBE2D2. This chain is Cullin-9 (CUL9), found in Homo sapiens (Human).